A 304-amino-acid chain; its full sequence is Probable 5-dehydro-4-deoxyglucarate dehydratase (304 aa).

The protein belongs to the DapA family.

It catalyses the reaction 5-dehydro-4-deoxy-D-glucarate + H(+) = 2,5-dioxopentanoate + CO2 + H2O. It participates in carbohydrate acid metabolism; D-glucarate degradation; 2,5-dioxopentanoate from D-glucarate: step 2/2. This chain is Probable 5-dehydro-4-deoxyglucarate dehydratase, found in Arthrobacter sp. (strain FB24).